The following is a 92-amino-acid chain: Small ribosomal subunit protein uS19 (92 aa).

The protein belongs to the universal ribosomal protein uS19 family.

Functionally, protein S19 forms a complex with S13 that binds strongly to the 16S ribosomal RNA. In Acholeplasma laidlawii (strain PG-8A), this protein is Small ribosomal subunit protein uS19.